Reading from the N-terminus, the 219-residue chain is 2-C-methyl-D-erythritol 4-phosphate cytidylyltransferase (219 aa).

It belongs to the IspD/TarI cytidylyltransferase family. IspD subfamily.

The catalysed reaction is 2-C-methyl-D-erythritol 4-phosphate + CTP + H(+) = 4-CDP-2-C-methyl-D-erythritol + diphosphate. The protein operates within isoprenoid biosynthesis; isopentenyl diphosphate biosynthesis via DXP pathway; isopentenyl diphosphate from 1-deoxy-D-xylulose 5-phosphate: step 2/6. In terms of biological role, catalyzes the formation of 4-diphosphocytidyl-2-C-methyl-D-erythritol from CTP and 2-C-methyl-D-erythritol 4-phosphate (MEP). This Chlamydia trachomatis serovar D (strain ATCC VR-885 / DSM 19411 / UW-3/Cx) protein is 2-C-methyl-D-erythritol 4-phosphate cytidylyltransferase.